The primary structure comprises 349 residues: Aminomethyltransferase (349 aa).

This sequence belongs to the GcvT family. In terms of assembly, the glycine cleavage system is composed of four proteins: P, T, L and H.

It carries out the reaction N(6)-[(R)-S(8)-aminomethyldihydrolipoyl]-L-lysyl-[protein] + (6S)-5,6,7,8-tetrahydrofolate = N(6)-[(R)-dihydrolipoyl]-L-lysyl-[protein] + (6R)-5,10-methylene-5,6,7,8-tetrahydrofolate + NH4(+). The glycine cleavage system catalyzes the degradation of glycine. This Thermus thermophilus (strain ATCC 27634 / DSM 579 / HB8) protein is Aminomethyltransferase.